A 90-amino-acid polypeptide reads, in one-letter code: U7-theraphotoxin-Hhn1i (90 aa).

A signal peptide spans 1 to 19; sequence MKTAIFTVVLALAVFAVLS. The propeptide occupies 20 to 50; that stretch reads FGWEANEKALSEEFTELIHEKEAASETEARE. Intrachain disulfides connect Cys-51–Cys-65, Cys-58–Cys-70, and Cys-64–Cys-81.

The protein belongs to the neurotoxin 10 (Hwtx-1) family. 13 (Hntx-13) subfamily. As to expression, expressed by the venom gland.

It localises to the secreted. In terms of biological role, ion channel inhibitor. This Cyriopagopus hainanus (Chinese bird spider) protein is U7-theraphotoxin-Hhn1i.